Reading from the N-terminus, the 161-residue chain is Nucleotide-binding protein Shewmr4_3156 (161 aa).

The protein belongs to the YajQ family.

Its function is as follows. Nucleotide-binding protein. This chain is Nucleotide-binding protein Shewmr4_3156, found in Shewanella sp. (strain MR-4).